We begin with the raw amino-acid sequence, 296 residues long: MSKYFISAPAKINLFLHIVGKAPCGYHLIESVFAFVELYDVLEFDIGSRNRGIRFLKPSCINRRDNTIQRAIGHLVRRCSPGTTDNVYVKVLKNIPVSSGLAGGSADAAAAINLLSKLWGINEKETERVAFRVGSDVPVCLESKTAFVAGMGDVVELLEDSFLPRHVILVGPKVELSTKSVFDMYNPKAFSPSIGKLPGNSEDWLSLLKEARNDLTEVSVELVPEIRIILDVLGSLDGCCFSRMSGSGAMSFAIFEDENSAELATRYLRRNYPDWFIFKTRIIRSSDQEDNNMGNL.

Lys11 is a catalytic residue. 96-106 (PVSSGLAGGSA) contacts ATP. Asp136 is a catalytic residue.

Belongs to the GHMP kinase family. IspE subfamily.

It carries out the reaction 4-CDP-2-C-methyl-D-erythritol + ATP = 4-CDP-2-C-methyl-D-erythritol 2-phosphate + ADP + H(+). It participates in isoprenoid biosynthesis; isopentenyl diphosphate biosynthesis via DXP pathway; isopentenyl diphosphate from 1-deoxy-D-xylulose 5-phosphate: step 3/6. In terms of biological role, catalyzes the phosphorylation of the position 2 hydroxy group of 4-diphosphocytidyl-2C-methyl-D-erythritol. This is 4-diphosphocytidyl-2-C-methyl-D-erythritol kinase from Anaplasma phagocytophilum (strain HZ).